The chain runs to 360 residues: Peptide chain release factor 1 (360 aa).

At Q235 the chain carries N5-methylglutamine. Residues E283–A293 are compositionally biased toward basic and acidic residues. A disordered region spans residues E283–D305.

This sequence belongs to the prokaryotic/mitochondrial release factor family. Methylated by PrmC. Methylation increases the termination efficiency of RF1.

It is found in the cytoplasm. Peptide chain release factor 1 directs the termination of translation in response to the peptide chain termination codons UAG and UAA. This Ralstonia pickettii (strain 12J) protein is Peptide chain release factor 1.